Consider the following 109-residue polypeptide: uncharacterized protein (109 aa).

Residues Met1–Ser23 form the signal peptide. Asn27 carries N-linked (GlcNAc...) asparagine glycosylation. The tract at residues Tyr45–Asn109 is disordered. Residues Pro54 to Gln72 are compositionally biased toward low complexity. The span at Lys94–Gln103 shows a compositional bias: basic and acidic residues.

Its subcellular location is the secreted. This is an uncharacterized protein from Dictyostelium discoideum (Social amoeba).